The chain runs to 79 residues: Defensin-like protein 109 (79 aa).

Positions 1-24 are cleaved as a signal peptide; sequence MDFTKKILVVFAFTIMLGISSVHC. 4 cysteine pairs are disulfide-bonded: Cys41/Cys76, Cys47/Cys68, Cys54/Cys74, and Cys58/Cys75.

It belongs to the DEFL family.

The protein localises to the secreted. The sequence is that of Defensin-like protein 109 from Arabidopsis thaliana (Mouse-ear cress).